A 404-amino-acid polypeptide reads, in one-letter code: Probable pectate lyase 18 (404 aa).

An N-terminal signal peptide occupies residues 1–20; the sequence is MSTLFFTFSLLLLAPLLVIS. N-linked (GlcNAc...) asparagine glycosylation is present at Asn37. Cys159 and Cys178 are joined by a disulfide. The N-linked (GlcNAc...) asparagine glycan is linked to Asn191. Positions 200, 202, 224, and 228 each coordinate Ca(2+). The active site involves Arg280.

It belongs to the polysaccharide lyase 1 family. Requires Ca(2+) as cofactor. In terms of tissue distribution, predominantly found in the pistil where it is found in the outer five layers of the strands of transmitting tissue within the upper two-thirds of the style. Found at much lower levels in the anthers and vegetative organs.

It localises to the secreted. The catalysed reaction is Eliminative cleavage of (1-&gt;4)-alpha-D-galacturonan to give oligosaccharides with 4-deoxy-alpha-D-galact-4-enuronosyl groups at their non-reducing ends.. It functions in the pathway glycan metabolism; pectin degradation; 2-dehydro-3-deoxy-D-gluconate from pectin: step 2/5. In terms of biological role, may have a role in the development of the transmitting tissue of the style and/or in the events related to pollination such as some aspect in the facilitation of compatible pollen tube growth. This Solanum lycopersicum (Tomato) protein is Probable pectate lyase 18.